The primary structure comprises 2124 residues: Genome polyprotein (2124 aa).

Residue Gly2 is the site of N-myristoyl glycine; by host attachment. The host EIF4E binding stretch occupies residues 873–880 (VARDLLLI). Positions 1102–1264 (VQIATYFRNF…SAATKNGKLD (163 aa)) constitute an SF3 helicase domain. Residue 1130 to 1137 (GKPGVGKS) coordinates ATP. Over residues 1415–1437 (DKPKEEEEEPEEKKEKKTEESKE) the composition is skewed to basic and acidic residues. The tract at residues 1415-1446 (DKPKEEEEEPEEKKEKKTEESKEAAGPYNGPT) is disordered. Tyr1442 is modified (O-(5'-phospho-RNA)-tyrosine). In terms of domain architecture, Peptidase C3 spans 1459–1648 (SPLMDMEKKI…VGTRLTARMI (190 aa)). Catalysis depends on for protease 3C activity residues His1501, Asp1535, and Cys1612. The 119-residue stretch at 1893–2011 (PYLYDFDYSN…ASKFELDLVM (119 aa)) folds into the RdRp catalytic domain. Active-site for RdRp activity residues include Asp1899 and Asp1997.

It belongs to the picornaviruses polyprotein family. As to quaternary structure, interacts with host EIF4E. Interacts with host IFIH1/MDA5; this interaction inhibits the induction of the IFN-beta signal pathway. Specific enzymatic cleavages by the viral protease in vivo yield a variety of precursors and mature proteins. The polyprotein seems to be cotranslationally cleaved at the 2A/2B junction by a ribosomal skip from one codon to the next without formation of a peptide bond. This process would release the P1-2A peptide from the translational complex. In terms of processing, during virion maturation, immature virions are rendered infectious following cleavage of VP0 into VP4 and VP2. This maturation seems to be an autocatalytic event triggered by the presence of RNA in the capsid and is followed by a conformational change of the particle. Post-translationally, myristoylation is required during RNA encapsidation and formation of the mature virus particle. Uridylylated by the polymerase and is covalently linked to the 5'-end of genomic RNA. This uridylylated form acts as a nucleotide-peptide primer for the polymerase.

It is found in the virion. Its subcellular location is the host cytoplasm. The protein resides in the host nucleus. It localises to the host nucleolus. The protein localises to the host cytoplasmic vesicle membrane. It carries out the reaction RNA(n) + a ribonucleoside 5'-triphosphate = RNA(n+1) + diphosphate. It catalyses the reaction ATP + H2O = ADP + phosphate + H(+). The enzyme catalyses Selective cleavage of Gln-|-Gly bond in the poliovirus polyprotein. In other picornavirus reactions Glu may be substituted for Gln, and Ser or Thr for Gly.. Its function is as follows. Forms an icosahedral capsid of pseudo T=3 symmetry with capsid proteins VP2 and VP3. Together they form an icosahedral capsid composed of 60 copies of each VP1, VP2, and VP3, with a diameter of approximately 300 Angstroms. VP4 lies on the inner surface of the protein shell formed by VP1, VP2 and VP3. All the three latter proteins contain a beta-sheet structure called beta-barrel jelly roll. VP1 is situated at the 12 fivefold axes, whereas VP2 and VP3 are located at the quasi-sixfold axes. In terms of biological role, lies on the inner surface of the capsid shell. After binding to the host receptor, the capsid undergoes conformational changes. Capsid protein VP4 is released, capsid protein VP1 N-terminus is externalized, and together, they shape a pore in the host membrane through which the viral genome is translocated into the host cell cytoplasm. After genome has been released, the channel shrinks. Functionally, VP0 precursor is a component of immature procapsids. Involved in host translation shutoff by inhibiting cap-dependent mRNA translation. Nuclear localization is required for this function. The resulting inhibition of cellular protein synthesis serves to ensure maximal viral gene expression and to evade host immune response. Its function is as follows. Affects membrane integrity and causes an increase in membrane permeability. In terms of biological role, associates with and induces structural rearrangements of intracellular membranes. It displays RNA-binding, nucleotide binding and NTPase activities. Interacts with IFIH1/MDA5 to inhibit the induction of the IFN-beta signal pathway. Functionally, serves as membrane anchor via its hydrophobic domain. Forms a primer, VPg-pU, which is utilized by the polymerase for the initiation of RNA chains. Its function is as follows. Cysteine protease that generates mature viral proteins from the precursor polyprotein. In addition to its proteolytic activity, it binds to viral RNA, and thus influences viral genome replication. RNA and substrate cooperatively bind to the protease. Cleaves host PABP1, this cleavage is important for viral replication. Cleaves host TANK and disrupts the TANK-TBK1-IKKepsilon-IRF3 complex, thereby inhibiting the induction of the IFN-beta signal pathway. In terms of biological role, replicates the genomic and antigenomic RNAs by recognizing replications specific signals. Performs VPg uridylylation. The chain is Genome polyprotein from Cosavirus A (isolate Human/Pakistan/0553/-) (HCoSV-A).